The following is a 320-amino-acid chain: MMENLLIPPPPWTGRMDGTSSHHLRWHQAVTPLQDGVEPGACVFIGFSSDEGVERNKGRRGASRGPDALRSALSSMALAEPLRAYDAGTVAVTDNRLEAGQEALGAVVAATLDAGQFPVVLGGGHEVAFGTYLGLAQASVRTPGKRIGILNLDAHFDLRSDPVPSSGTPFRQILEREHAAGTTLQYSVLGISQPSNTTALFDTARGYDVRYLLDDECSVSDRHRVAVFVSEFLSDVDLVYLTIDLDVLPAAVAPGVSAPAAYGVPAETIQFVCDAIAASGKLAVVDVAELNPSFDIDNRTARTAARFIHRIVTKRIPIVR.

Residues H125, D153, H155, D157, D244, and D246 each coordinate Mn(2+).

Belongs to the arginase family. It depends on Mn(2+) as a cofactor.

The enzyme catalyses N-formimidoyl-L-glutamate + H2O = formamide + L-glutamate. It participates in amino-acid degradation; L-histidine degradation into L-glutamate; L-glutamate from N-formimidoyl-L-glutamate (hydrolase route): step 1/1. Functionally, catalyzes the conversion of N-formimidoyl-L-glutamate to L-glutamate and formamide. In Rhodococcus opacus (strain B4), this protein is Formimidoylglutamase.